The primary structure comprises 310 residues: Protoheme IX farnesyltransferase 2 (310 aa).

9 consecutive transmembrane segments (helical) span residues 25–45 (PGIIFGNLISVAGGFLLAAKG), 49–69 (LVLMLASLVGLSLVVASGCAI), 98–118 (HVLLFGIALGVLGFGILALFT), 121–141 (LALLFAAIGYVVYVGIYSLYM), 145–165 (SVYGTLVGSFSGAVPPVVGYC), 176–196 (VILLLMFSLWQMPHSYAIAIF), 222–242 (IVLYIAVFALVSTMLPLAGYT), 245–265 (AFMAVTCATSLWWLTMALKGY), and 277–297 (QVFGFSIITITALSVTMALDF).

This sequence belongs to the UbiA prenyltransferase family. Protoheme IX farnesyltransferase subfamily.

It is found in the cell inner membrane. The enzyme catalyses heme b + (2E,6E)-farnesyl diphosphate + H2O = Fe(II)-heme o + diphosphate. Its pathway is porphyrin-containing compound metabolism; heme O biosynthesis; heme O from protoheme: step 1/1. Converts heme B (protoheme IX) to heme O by substitution of the vinyl group on carbon 2 of heme B porphyrin ring with a hydroxyethyl farnesyl side group. The sequence is that of Protoheme IX farnesyltransferase 2 from Shewanella sp. (strain ANA-3).